Consider the following 645-residue polypeptide: ATP-dependent DNA helicase Rep (645 aa).

A UvrD-like helicase ATP-binding domain is found at 1 to 280 (MSLNFSQKNA…IKMEHNYRSS (280 aa)). ATP-binding positions include 22-29 (AGAGSGKT) and arginine 278. The UvrD-like helicase C-terminal domain occupies 281–562 (GRILKAANSL…QLMTLHASKG (282 aa)).

The protein belongs to the helicase family. UvrD subfamily. In terms of assembly, homodimer.

It catalyses the reaction Couples ATP hydrolysis with the unwinding of duplex DNA by translocating in the 3'-5' direction.. The enzyme catalyses ATP + H2O = ADP + phosphate + H(+). Rep helicase is a single-stranded DNA-dependent ATPase involved in DNA replication; it can initiate unwinding at a nick in the DNA. It binds to the single-stranded DNA and acts in a progressive fashion along the DNA in the 3' to 5' direction. In Buchnera aphidicola subsp. Acyrthosiphon pisum (strain APS) (Acyrthosiphon pisum symbiotic bacterium), this protein is ATP-dependent DNA helicase Rep.